Reading from the N-terminus, the 160-residue chain is Large ribosomal subunit protein uL22c (160 aa).

This sequence belongs to the universal ribosomal protein uL22 family. In terms of assembly, part of the 50S ribosomal subunit.

It localises to the plastid. The protein resides in the chloroplast. Its function is as follows. This protein binds specifically to 23S rRNA. In terms of biological role, the globular domain of the protein is located near the polypeptide exit tunnel on the outside of the subunit, while an extended beta-hairpin is found that lines the wall of the exit tunnel in the center of the 70S ribosome. This chain is Large ribosomal subunit protein uL22c (rpl22), found in Aethionema grandiflorum (Persian stone-cress).